A 519-amino-acid polypeptide reads, in one-letter code: Circadian clock oscillator protein KaiC (519 aa).

2 consecutive KaiC domains span residues 1 to 246 (MSEK…VNIF) and 260 to 519 (VRVS…GSDS). Gly-48, Thr-49, Gly-50, Lys-51, Thr-52, Leu-53, Lys-223, Leu-224, Arg-225, Thr-227, His-229, Thr-239, Thr-289, Gly-290, Thr-291, Gly-292, Lys-293, Thr-294, and Leu-295 together coordinate ATP. Residue Thr-52 coordinates Mg(2+). Residue Thr-294 participates in Mg(2+) binding. Glu-317 serves as a coordination point for Mg(2+). Position 330 (Trp-330) interacts with ATP. Ser-430 is modified (phosphoserine; by autocatalysis). Thr-431 bears the Phosphothreonine; by autocatalysis mark. ATP-binding residues include Arg-450, Lys-456, Met-457, Arg-458, Ser-460, His-462, and Lys-464.

Belongs to the KaiC family. In terms of assembly, homohexamer; hexamerization is dependent on ATP-binding. The KaiABC complex composition changes during the circadian cycle to control KaiC phosphorylation. Complexes KaiC(6), KaiA(2-4):KaiC(6), KaiB(6):KaiC(6) and KaiC(6):KaiB(6):KaiA(12) are among the most important forms, many form cooperatively. KaiC interacts with SasA, activating its autokinase function and leading to RpaA activation. Mg(2+) is required as a cofactor. Post-translationally, phosphorylated on serine and threonine residues by autocatalysis. Has a 4 step phosphorylation cycle; the autokinase acts first on Thr-431, then Ser-430. When Ser-430 is modified KaiC switches to an autophosphatase mode, acting first on phospho-Thr-431 then phospho-Ser-430.

The enzyme catalyses L-seryl-[protein] + ATP = O-phospho-L-seryl-[protein] + ADP + H(+). It carries out the reaction L-threonyl-[protein] + ATP = O-phospho-L-threonyl-[protein] + ADP + H(+). The catalysed reaction is ATP + H2O = ADP + phosphate + H(+). The interaction with KaiA enhances its phosphorylation status, while the interaction with KaiB decreases it. Its function is as follows. Central component of the KaiABC oscillator complex, which constitutes the main circadian regulator in cyanobacteria. Complex composition changes during the circadian cycle to control KaiC phosphorylation. KaiA stimulates KaiC autophosphorylation, while KaiB sequesters KaiA, leading to KaiC autodephosphorylation. Clock output pathways impact the RpaA transcriptional regulator. KaiC enhances the autophosphorylation activity of SasA, which then transfers its phosphate group to RpaA to activate it. KaiB and KaiC together enhance the phospho-RpaA dephosphatase activity of CikA. Has a weak, temperature-independent ATPase activity; ATPase activity defines the circadian period. The phosphorylation state of KaiC modulates its ATPase activity and effects KaiB binding. This chain is Circadian clock oscillator protein KaiC, found in Nostoc sp. (strain PCC 7120 / SAG 25.82 / UTEX 2576).